Here is a 777-residue protein sequence, read N- to C-terminus: Gliding motility regulatory protein (777 aa).

Residues 1 to 108 form the HPt domain; sequence MDTEALKKSL…SDLNEDLSGA (108 aa). Position 49 is a phosphohistidine; by autocatalysis (histidine 49). 2 disordered regions span residues 129–149 and 164–212; these read TPPA…PPAP and PAPV…KSAV. Pro residues-rich tracts occupy residues 139–149 and 164–177; these read VAPPPAPPPAP and PAPV…PPTQ. The segment covering 178-197 has biased composition (low complexity); it reads APVAEPGAHAAAAAPHPAAA. The Histidine kinase domain occupies 270–509; the sequence is DISNEVREQL…TITLRLPQSL (240 aa). Residues 511-645 form the CheW-like domain; it reads LMKVLLVRLG…VPDIMAEVRR (135 aa). Residues 660–776 enclose the Response regulatory domain; that stretch reads RVLLVDDSPI…EVLAQAIDRL (117 aa). The residue at position 709 (aspartate 709) is a 4-aspartylphosphate.

The enzyme catalyses ATP + protein L-histidine = ADP + protein N-phospho-L-histidine.. Functionally, frzE is involved in a sensory transduction pathway that controls the frequency at which cells reverse their gliding direction. FrzE seems to be capable of autophosphorylating itself on a histidine residue and then to transfer that group to an aspartate residue in the C-terminal part of the protein. The chain is Gliding motility regulatory protein (frzE) from Myxococcus xanthus.